The following is a 316-amino-acid chain: Olfactory receptor 2H1 (316 aa).

Over 1–23 (MVNQSSPMGFLLLGFSEHPALER) the chain is Extracellular. Asn3 is a glycosylation site (N-linked (GlcNAc...) asparagine). The helical transmembrane segment at 24 to 47 (TLFVVVFTSYLLTLVGNTLIILLS) threads the bilayer. Topologically, residues 48 to 55 (VLYPRLHS) are cytoplasmic. Residues 56 to 77 (PMYFFLSDLSFLDLCFTTSCVP) form a helical membrane-spanning segment. Residues 78-98 (QMLVNLWGPKKTISFLGCSVQ) lie on the Extracellular side of the membrane. Cys95 and Cys187 are disulfide-bonded. Residues 99-118 (LFIFLSLGTTECILLTVMAF) form a helical membrane-spanning segment. Topologically, residues 119–137 (DRYVAVCQPLHYATIIHPR) are cytoplasmic. The chain crosses the membrane as a helical span at residues 138–156 (LCWQLASVAWVMSLVQSIV). Topologically, residues 157 to 193 (QTPSTLHLPFCPHQQIDDFLCEVPSLIRLSCGDTSYN) are extracellular. Residues 194-217 (EIQLAVSSVIFVVVPLSLILASYG) form a helical membrane-spanning segment. Over 218–234 (ATAQAVLRINSATAWRK) the chain is Cytoplasmic. The helical transmembrane segment at 235 to 257 (AFGTCSSHLTVVTLFYSSVIAVY) threads the bilayer. Over 258–270 (LQPKNPYAQGRGK) the chain is Extracellular. The chain crosses the membrane as a helical span at residues 271-290 (FFGLFYAVGTPSLNPLVYTL). Topologically, residues 291–316 (RNKEIKRALRRLLGKERDSRESWRAA) are cytoplasmic.

The protein belongs to the G-protein coupled receptor 1 family.

It localises to the cell membrane. Functionally, odorant receptor. The chain is Olfactory receptor 2H1 (OR2H1) from Homo sapiens (Human).